We begin with the raw amino-acid sequence, 197 residues long: dITP/XTP pyrophosphatase (197 aa).

A substrate-binding site is contributed by 10 to 15; sequence SHNGGK. 2 residues coordinate Mg(2+): glutamate 41 and aspartate 70. Aspartate 70 acts as the Proton acceptor in catalysis. Residues serine 71, 154 to 157, lysine 177, and 182 to 183 each bind substrate; these read FGYD and HR.

Belongs to the HAM1 NTPase family. Homodimer. The cofactor is Mg(2+).

The enzyme catalyses XTP + H2O = XMP + diphosphate + H(+). It carries out the reaction dITP + H2O = dIMP + diphosphate + H(+). It catalyses the reaction ITP + H2O = IMP + diphosphate + H(+). Functionally, pyrophosphatase that catalyzes the hydrolysis of nucleoside triphosphates to their monophosphate derivatives, with a high preference for the non-canonical purine nucleotides XTP (xanthosine triphosphate), dITP (deoxyinosine triphosphate) and ITP. Seems to function as a house-cleaning enzyme that removes non-canonical purine nucleotides from the nucleotide pool, thus preventing their incorporation into DNA/RNA and avoiding chromosomal lesions. The chain is dITP/XTP pyrophosphatase from Pseudomonas syringae pv. tomato (strain ATCC BAA-871 / DC3000).